The sequence spans 893 residues: Alanine--tRNA ligase (893 aa).

Zn(2+) is bound by residues H575, H579, C677, and H681.

It belongs to the class-II aminoacyl-tRNA synthetase family. Requires Zn(2+) as cofactor.

The protein resides in the cytoplasm. The enzyme catalyses tRNA(Ala) + L-alanine + ATP = L-alanyl-tRNA(Ala) + AMP + diphosphate. In terms of biological role, catalyzes the attachment of alanine to tRNA(Ala) in a two-step reaction: alanine is first activated by ATP to form Ala-AMP and then transferred to the acceptor end of tRNA(Ala). Also edits incorrectly charged Ser-tRNA(Ala) and Gly-tRNA(Ala) via its editing domain. This chain is Alanine--tRNA ligase, found in Synechococcus sp. (strain CC9311).